The sequence spans 461 residues: MSSVAKKDKRTMSVTALINRAWPLTPAPHQQQSMPSSQPSNFLQPLATPSTTPSVELDIQWLNIEPGFMSPMSPPEMKPDTAMLDGLRDDSTPPPAFKNYPPNHPLSGSKHLCSICGDRASGKHYGVYSCEGCKGFFKRTVRKDLTYACREDRNCIIDKRQRNRCQYCRYQKCLACGMKREAVQEERQRAARGTEDAHPSSSVQELSIERLLEIESLVADPPEEFQFLRVGPESGVPAKYRAPVSSLCQIGNKQIAALVVWARDIPHFGQLELEDQILLIKNSWNELLLFAIAWRSMEYLTDERENVDSRSTAPPQLMCLMPGMTLHRNSALQAGVGQIFDRVLSELSLKMRTLRMDQAEYVALKAIILLNPDVKGLKNKPEVVVLREKMFSCLDEYVRRSRCAEEGRFAALLLRLPALRSISLKCFEHLYFFHLVADTSIASYIHDALRNHAPSIDTSIL.

The tract at residues 1–112 (MSSVAKKDKR…NHPLSGSKHL (112 aa)) is modulating. The segment at 26 to 51 (PAPHQQQSMPSSQPSNFLQPLATPST) is disordered. A compositionally biased stretch (low complexity) spans 27–40 (APHQQQSMPSSQPS). The span at 41 to 51 (NFLQPLATPST) shows a compositional bias: polar residues. 2 NR C4-type zinc fingers span residues 113-133 (CSIC…CEGC) and 149-173 (CRED…YQKC). Residues 113–185 (CSICGDRASG…CGMKREAVQE (73 aa)) constitute a DNA-binding region (nuclear receptor). The segment at 185–192 (EERQRAAR) is hinge. The 250-residue stretch at 203–452 (VQELSIERLL…SYIHDALRNH (250 aa)) folds into the NR LBD domain.

The protein belongs to the nuclear hormone receptor family. NR2 subfamily. In terms of assembly, heterodimer of USP and ECR. Only the heterodimer is capable of high-affinity binding to ecdysone.

Its subcellular location is the nucleus. Its function is as follows. Receptor for ecdysone. May be an important modulator of insect metamorphosis. The protein is Protein ultraspiracle homolog (USP) of Manduca sexta (Tobacco hawkmoth).